The sequence spans 302 residues: Lysosomal thioesterase PPT2 (302 aa).

The first 27 residues, 1-27 (MLGLCGQRLPAAWVLLLLPFLPLLLLA), serve as a signal peptide directing secretion. Asn-60 is a glycosylation site (N-linked (GlcNAc...) asparagine). 2 cysteine pairs are disulfide-bonded: Cys-109–Cys-117 and Cys-165–Cys-176. Catalysis depends on Ser-111, which acts as the Nucleophile. N-linked (GlcNAc...) asparagine glycans are attached at residues Asn-190 and Asn-206. Asp-228 is a catalytic residue. An N-linked (GlcNAc...) asparagine glycan is attached at Asn-245. Cys-276 and Cys-296 are disulfide-bonded. His-283 is an active-site residue. A glycan (N-linked (GlcNAc...) asparagine) is linked at Asn-289.

The protein belongs to the palmitoyl-protein thioesterase family. As to expression, broadly expressed, with highest levels in skeletal muscle.

It is found in the lysosome. The enzyme catalyses hexadecanoyl-CoA + H2O = hexadecanoate + CoA + H(+). It catalyses the reaction S-hexadecanoyl-N-acetylcysteamine + H2O = N-acetylcysteamine + hexadecanoate + H(+). Catalyzes the cleavage of thioester bonds from S-palmitoyl-CoA or S-palmitoyl-N-acetylcysteamine (unbranched structures) but does not have activity against palmitoylcysteine or palmitoylated proteins, branched structures or bulky head groups. Conversely, hydrolyzes both long and short chain fatty acyl-CoA substrate. In terms of biological role, catalytically inactive due to lack of active site His-283. The sequence is that of Lysosomal thioesterase PPT2 from Homo sapiens (Human).